We begin with the raw amino-acid sequence, 95 residues long: UPF0358 protein BA_4159/GBAA_4159/BAS3861 (95 aa).

This sequence belongs to the UPF0358 family.

The sequence is that of UPF0358 protein BA_4159/GBAA_4159/BAS3861 from Bacillus anthracis.